A 122-amino-acid polypeptide reads, in one-letter code: MIQMQSTLEVACNSGARRVQCIKVLGGSHRRYAGIGDVIKVSVKEAIPRGKAKKGDVYNAVVVRTKKGVRRPDGSVIRFDRNAAVLLNANLAPIGTRIFGPVTRELRTEQFMKIVSLAPEVL.

It belongs to the universal ribosomal protein uL14 family. As to quaternary structure, part of the 50S ribosomal subunit. Forms a cluster with proteins L3 and L19. In the 70S ribosome, L14 and L19 interact and together make contacts with the 16S rRNA in bridges B5 and B8.

In terms of biological role, binds to 23S rRNA. Forms part of two intersubunit bridges in the 70S ribosome. The polypeptide is Large ribosomal subunit protein uL14 (Shewanella loihica (strain ATCC BAA-1088 / PV-4)).